The following is a 570-amino-acid chain: Proline--tRNA ligase (570 aa).

This sequence belongs to the class-II aminoacyl-tRNA synthetase family. ProS type 1 subfamily. In terms of assembly, homodimer.

It is found in the cytoplasm. It catalyses the reaction tRNA(Pro) + L-proline + ATP = L-prolyl-tRNA(Pro) + AMP + diphosphate. Its function is as follows. Catalyzes the attachment of proline to tRNA(Pro) in a two-step reaction: proline is first activated by ATP to form Pro-AMP and then transferred to the acceptor end of tRNA(Pro). As ProRS can inadvertently accommodate and process non-cognate amino acids such as alanine and cysteine, to avoid such errors it has two additional distinct editing activities against alanine. One activity is designated as 'pretransfer' editing and involves the tRNA(Pro)-independent hydrolysis of activated Ala-AMP. The other activity is designated 'posttransfer' editing and involves deacylation of mischarged Ala-tRNA(Pro). The misacylated Cys-tRNA(Pro) is not edited by ProRS. The protein is Proline--tRNA ligase of Pelotomaculum thermopropionicum (strain DSM 13744 / JCM 10971 / SI).